Here is a 431-residue protein sequence, read N- to C-terminus: MKKVYSKIESINGSVITVKADGVSYGELAEVQTRFGASLAEVNKLEGDLVSLQVFAGGRGVSTGDEVRFLGKEMQVSYSEDLLGRIFNGSGDPRDSGPALKDNMIPIGGPSVNPSKRILANRMIRTGIPMIDVFNTLVVSQKLPIFSSSGEPYNELLARIAMQAEVDVIILGGMGLKYDDYLYFKDTLEEAGALSRTAMFVHTAADPTVECLMIPDMCLAVAEKFAIAGKNVLVLLTDMTNFADAMKEIAIIQEQVPSNRGYPGDLYSQLAARYEKAVDFADAGSVTVLAVTTMPGDDVTHPVPDNTGYITEGQFYLKNGRIEPFGSLSRLKQNVNGKTRDDHRALMDNMIKLYASYKDTLEKKSMGFMMSEWDEKLLKYGAKFESGMMDLSVNIPLEDALNLGWKILAECFTREETGIKSELVNKYWPAN.

It belongs to the ATPase alpha/beta chains family.

Its function is as follows. Produces ATP from ADP in the presence of a proton gradient across the membrane. The V-type beta chain is a regulatory subunit. The protein is V-type ATP synthase beta chain of Treponema denticola (strain ATCC 35405 / DSM 14222 / CIP 103919 / JCM 8153 / KCTC 15104).